The primary structure comprises 347 residues: Histone deacetylase 11 (347 aa).

The tract at residues 14-318 (KRWPIVYSPR…ARIIADSILN (305 aa)) is histone deacetylase. His-143 is a catalytic residue.

It belongs to the histone deacetylase family. In terms of assembly, interacts with HDAC6.

The protein localises to the nucleus. It carries out the reaction N(6)-acetyl-L-lysyl-[histone] + H2O = L-lysyl-[histone] + acetate. Responsible for the deacetylation of lysine residues on the N-terminal part of the core histones (H2A, H2B, H3 and H4). Histone deacetylation gives a tag for epigenetic repression and plays an important role in transcriptional regulation, cell cycle progression and developmental events. Histone deacetylases act via the formation of large multiprotein complexes. The polypeptide is Histone deacetylase 11 (Hdac11) (Mus musculus (Mouse)).